A 283-amino-acid chain; its full sequence is Formamidopyrimidine-DNA glycosylase (283 aa).

Pro2 (schiff-base intermediate with DNA) is an active-site residue. The active-site Proton donor is the Glu3. Catalysis depends on Lys58, which acts as the Proton donor; for beta-elimination activity. His100, Arg119, and Arg162 together coordinate DNA. The FPG-type zinc-finger motif lies at Asp247–Arg283. Arg273 serves as the catalytic Proton donor; for delta-elimination activity.

Belongs to the FPG family. Monomer. It depends on Zn(2+) as a cofactor.

The enzyme catalyses Hydrolysis of DNA containing ring-opened 7-methylguanine residues, releasing 2,6-diamino-4-hydroxy-5-(N-methyl)formamidopyrimidine.. It catalyses the reaction 2'-deoxyribonucleotide-(2'-deoxyribose 5'-phosphate)-2'-deoxyribonucleotide-DNA = a 3'-end 2'-deoxyribonucleotide-(2,3-dehydro-2,3-deoxyribose 5'-phosphate)-DNA + a 5'-end 5'-phospho-2'-deoxyribonucleoside-DNA + H(+). Involved in base excision repair of DNA damaged by oxidation or by mutagenic agents. Acts as a DNA glycosylase that recognizes and removes damaged bases. Has a preference for oxidized purines, such as 7,8-dihydro-8-oxoguanine (8-oxoG). Has AP (apurinic/apyrimidinic) lyase activity and introduces nicks in the DNA strand. Cleaves the DNA backbone by beta-delta elimination to generate a single-strand break at the site of the removed base with both 3'- and 5'-phosphates. This chain is Formamidopyrimidine-DNA glycosylase, found in Ruegeria pomeroyi (strain ATCC 700808 / DSM 15171 / DSS-3) (Silicibacter pomeroyi).